Here is a 151-residue protein sequence, read N- to C-terminus: Protein SprT-like (151 aa).

A SprT-like domain is found at 6 to 147 (LQRMVENLSE…GHCNGKLRMK (142 aa)). Histidine 67 lines the Zn(2+) pocket. The active site involves glutamate 68. Histidine 71 contributes to the Zn(2+) binding site.

It belongs to the SprT family. The cofactor is Zn(2+).

It localises to the cytoplasm. This Staphylococcus aureus (strain Mu3 / ATCC 700698) protein is Protein SprT-like.